The chain runs to 127 residues: Fluoride-specific ion channel FluC (127 aa).

A run of 4 helical transmembrane segments spans residues 1–21 (MMSY…RHMV), 32–52 (EFPF…GAVV), 71–91 (TGIL…VLLY), and 96–116 (VFLA…ALLL). Positions 75 and 78 each coordinate Na(+).

Belongs to the fluoride channel Fluc/FEX (TC 1.A.43) family.

The protein localises to the cell inner membrane. It carries out the reaction fluoride(in) = fluoride(out). Its activity is regulated as follows. Na(+) is not transported, but it plays an essential structural role and its presence is essential for fluoride channel function. Functionally, fluoride-specific ion channel. Important for reducing fluoride concentration in the cell, thus reducing its toxicity. The sequence is that of Fluoride-specific ion channel FluC from Granulibacter bethesdensis (strain ATCC BAA-1260 / CGDNIH1).